A 413-amino-acid polypeptide reads, in one-letter code: Serine/threonine-protein kinase SSN3 (413 aa).

Positions 26-355 constitute a Protein kinase domain; it reads YHIVGFISSG…AQEALEHPYF (330 aa). Residues 32 to 40 and Lys-56 contribute to the ATP site; that span reads ISSGTYGRV. Asp-158 functions as the Proton acceptor in the catalytic mechanism. The span at 376 to 385 shows a compositional bias: basic and acidic residues; it reads RRVTQDDNDI. Residues 376 to 413 form a disordered region; sequence RRVTQDDNDIRSGSLPGTKRSGLPDDSLMGRASKRLKE.

This sequence belongs to the protein kinase superfamily. CMGC Ser/Thr protein kinase family. CDC2/CDKX subfamily. Component of the srb8-11 complex, a regulatory module of the Mediator complex. It depends on Mg(2+) as a cofactor.

The protein resides in the nucleus. The catalysed reaction is L-seryl-[protein] + ATP = O-phospho-L-seryl-[protein] + ADP + H(+). It catalyses the reaction L-threonyl-[protein] + ATP = O-phospho-L-threonyl-[protein] + ADP + H(+). The enzyme catalyses [DNA-directed RNA polymerase] + ATP = phospho-[DNA-directed RNA polymerase] + ADP + H(+). Its function is as follows. Component of the srb8-11 complex. The srb8-11 complex is a regulatory module of the Mediator complex which is itself involved in regulation of basal and activated RNA polymerase II-dependent transcription. The srb8-11 complex may be involved in the transcriptional repression of a subset of genes regulated by Mediator. It may inhibit the association of the Mediator complex with RNA polymerase II to form the holoenzyme complex. The srb8-11 complex phosphorylates the C-terminal domain (CTD) of the largest subunit of RNA polymerase II. This is Serine/threonine-protein kinase SSN3 (ssn3) from Aspergillus oryzae (strain ATCC 42149 / RIB 40) (Yellow koji mold).